We begin with the raw amino-acid sequence, 759 residues long: Mitogen-activated protein kinase kinase kinase 1a (759 aa).

Composition is skewed to basic and acidic residues over residues 1–17 (MIEE…DRGS), 25–36 (SFEDKGSSHDWK), and 52–64 (AKKD…KVDS). Disordered regions lie at residues 1 to 90 (MIEE…NLSK), 122 to 160 (LGIE…SHDF), 165 to 184 (SRVD…LAPM), and 195 to 239 (RKHR…PDPL). Residues 72 to 85 (VHSTSSPRLSPASS) are compositionally biased toward low complexity. Residues 426 to 679 (WAKGEFLGSG…CDMLLAHPFI (254 aa)) form the Protein kinase domain. Residues 432–440 (LGSGTFGSV) and lysine 454 each bind ATP. The active-site Proton acceptor is the aspartate 549.

It belongs to the protein kinase superfamily. STE Ser/Thr protein kinase family. MAP kinase kinase kinase subfamily.

The protein resides in the cell membrane. The enzyme catalyses L-seryl-[protein] + ATP = O-phospho-L-seryl-[protein] + ADP + H(+). The catalysed reaction is L-threonyl-[protein] + ATP = O-phospho-L-threonyl-[protein] + ADP + H(+). Functionally, the CERK1, MEKK1a/b, MKK1a/b/c and MPK4a/b proteins are involved in pathogen defense. The pathway induces rapid growth inhibition, cell wall depositions and accumulation of defense-related transcripts. This protein is required for responses to chitin and acts redundantly with MEKK1b. The protein is Mitogen-activated protein kinase kinase kinase 1a of Physcomitrium patens (Spreading-leaved earth moss).